The chain runs to 160 residues: MSQLVLDLKCLKDKIATNYDIHNNVYGGNGMEPNIIHPSKRFRIVVRLVDFLFCKSDEEFIKGFFCQMIVRNLHCLNSTNGAEEMRLYMSERLFSAHKDDLRLINGQVLDVRIGVWYGIHQSPPIFEIIDFKILSRNDVRDFCEFVKSPLGEKFLNISNS.

Interacts with CDC13 and STN1.

Its subcellular location is the nucleus. It localises to the chromosome. It is found in the telomere. Functionally, has a role in telomere length regulation and telomere end protection. Acts as an inhibitor of telomerase loading through its interaction with CDC13. This Saccharomyces cerevisiae (strain ATCC 204508 / S288c) (Baker's yeast) protein is Telomere length regulation protein TEN1 (TEN1).